We begin with the raw amino-acid sequence, 63 residues long: Large ribosomal subunit protein bL32 (63 aa).

Belongs to the bacterial ribosomal protein bL32 family.

This is Large ribosomal subunit protein bL32 from Lacticaseibacillus paracasei (strain ATCC 334 / BCRC 17002 / CCUG 31169 / CIP 107868 / KCTC 3260 / NRRL B-441) (Lactobacillus paracasei).